The following is a 527-amino-acid chain: Lysine--tRNA ligase (527 aa).

Glu-431 and Glu-438 together coordinate Mg(2+).

The protein belongs to the class-II aminoacyl-tRNA synthetase family. Homodimer. Mg(2+) serves as cofactor.

The protein localises to the cytoplasm. The catalysed reaction is tRNA(Lys) + L-lysine + ATP = L-lysyl-tRNA(Lys) + AMP + diphosphate. In Chlamydia pneumoniae (Chlamydophila pneumoniae), this protein is Lysine--tRNA ligase (lysS).